We begin with the raw amino-acid sequence, 122 residues long: Modulator protein MzrA (122 aa).

Residues 1–10 lie on the Cytoplasmic side of the membrane; that stretch reads MKILTRIPRR. The helical transmembrane segment at 11–31 threads the bilayer; that stretch reads LLPWLLGGALALVAVSFAPAL. Topologically, residues 32–122 are periplasmic; the sequence is LSHETVVQIR…NQDANRSIYS (91 aa).

It belongs to the MzrA family. Interacts with EnvZ.

It localises to the cell inner membrane. Its function is as follows. Modulates the activity of the EnvZ/OmpR two-component regulatory system, probably by directly modulating EnvZ enzymatic activity and increasing stability of phosphorylated OmpR. In Pantoea sp. (strain At-9b), this protein is Modulator protein MzrA.